A 149-amino-acid polypeptide reads, in one-letter code: uncharacterized protein (149 aa).

Ser-21 is modified (phosphoserine). 2 helical membrane-spanning segments follow: residues 48-68 (FMEFAVGSIVYSFGVPGWVLG) and 72-92 (VLAAGFLVMFLFLVWPCFQLV). The tract at residues 116 to 149 (AEEVPPPSYPSLEEENEGNEEIEESEEMNTLLSK) is disordered. Residues 127-142 (LEEENEGNEEIEESEE) are compositionally biased toward acidic residues.

It is found in the membrane. This is an uncharacterized protein from Schizosaccharomyces pombe (strain 972 / ATCC 24843) (Fission yeast).